Consider the following 551-residue polypeptide: Thermophilic beta-amylase (551 aa).

An N-terminal signal peptide occupies residues 1-32; sequence MIGAFKRLGQKLFLTLLTASLIFASSIVTANA. Asp73 contributes to the substrate binding site. Residue Glu80 coordinates Ca(2+). Positions 113 and 121 each coordinate substrate. Position 167 (Glu167) interacts with Ca(2+). Catalysis depends on Glu195, which acts as the Proton donor. Substrate is bound by residues Lys310, His315, and Thr353. Residue Glu392 is the Proton acceptor of the active site. Residues 393-394 and Arg423 contribute to the substrate site; that span reads NA. Residues 448 to 551 enclose the CBM20 domain; that stretch reads LTPNGTIPVT…TGSVTITWQN (104 aa).

The protein belongs to the glycosyl hydrolase 14 family. In terms of assembly, monomer. Requires Ca(2+) as cofactor.

It carries out the reaction Hydrolysis of (1-&gt;4)-alpha-D-glucosidic linkages in polysaccharides so as to remove successive maltose units from the non-reducing ends of the chains.. The chain is Thermophilic beta-amylase from Thermoanaerobacterium thermosulfurigenes (Clostridium thermosulfurogenes).